Consider the following 446-residue polypeptide: Radical S-adenosyl methionine domain-containing protein 1, mitochondrial (446 aa).

In terms of domain architecture, Radical SAM core spans 15 to 277 (KGYNKLKDLP…VCEAEAMGFQ (263 aa)). [4Fe-4S] cluster is bound by residues Cys34, Cys38, and Cys41. Residues Gly94, 95-96 (GT), Glu130, Gln159, Arg171, and Asp195 each bind S-adenosyl-L-methionine.

The protein belongs to the anaerobic coproporphyrinogen-III oxidase family. HemW subfamily.

Its subcellular location is the mitochondrion. Functionally, may be a heme chaperone, appears to bind heme. Homologous bacterial proteins do not have oxygen-independent coproporphyrinogen-III oxidase activity. Binds 1 [4Fe-4S] cluster. The cluster is coordinated with 3 cysteines and an exchangeable S-adenosyl-L-methionine. The chain is Radical S-adenosyl methionine domain-containing protein 1, mitochondrial (rsad1) from Dictyostelium discoideum (Social amoeba).